The following is a 201-amino-acid chain: Potassium-transporting ATPase KdpC subunit (201 aa).

The chain crosses the membrane as a helical span at residues 9 to 29 (ILVMLALTLITGLLYPLAMTV). Composition is skewed to polar residues over residues 73–84 (TTAADPNDSTKT) and 91–101 (AANSSGSNLGP). The disordered stretch occupies residues 73–103 (TTAADPNDSTKTVPAPYNAANSSGSNLGPTS).

The protein belongs to the KdpC family. The system is composed of three essential subunits: KdpA, KdpB and KdpC.

The protein resides in the cell inner membrane. Part of the high-affinity ATP-driven potassium transport (or Kdp) system, which catalyzes the hydrolysis of ATP coupled with the electrogenic transport of potassium into the cytoplasm. This subunit acts as a catalytic chaperone that increases the ATP-binding affinity of the ATP-hydrolyzing subunit KdpB by the formation of a transient KdpB/KdpC/ATP ternary complex. The polypeptide is Potassium-transporting ATPase KdpC subunit (Bradyrhizobium sp. (strain BTAi1 / ATCC BAA-1182)).